A 1368-amino-acid chain; its full sequence is Mediator of RNA polymerase II transcription subunit 23 (1368 aa).

Residues 1343-1368 are disordered; sequence VPPQAMNSGSPAPQSNQVPVSLPVTQ. A compositionally biased stretch (polar residues) spans 1347–1368; sequence AMNSGSPAPQSNQVPVSLPVTQ.

The protein belongs to the Mediator complex subunit 23 family. As to quaternary structure, interacts with ELK1. Component of the Mediator complex, which is composed of MED1, MED4, MED6, MED7, MED8, MED9, MED10, MED11, MED12, MED13, MED13L, MED14, MED15, MED16, MED17, MED18, MED19, MED20, MED21, MED22, MED23, MED24, MED25, MED26, MED27, MED29, MED30, MED31, CCNC, CDK8 and CDC2L6/CDK11. The MED12, MED13, CCNC and CDK8 subunits form a distinct module termed the CDK8 module. Mediator containing the CDK8 module is less active than Mediator lacking this module in supporting transcriptional activation. Individual preparations of the Mediator complex lacking one or more distinct subunits have been variously termed ARC, CRSP, DRIP, PC2, SMCC and TRAP. Interacts with CEBPB (when not methylated), CTNNB1, and GLI3. Interacts with the adenovirus E1A protein.

It is found in the nucleus. Required for transcriptional activation subsequent to the assembly of the pre-initiation complex. Component of the Mediator complex, a coactivator involved in the regulated transcription of nearly all RNA polymerase II-dependent genes. Mediator functions as a bridge to convey information from gene-specific regulatory proteins to the basal RNA polymerase II transcription machinery. Mediator is recruited to promoters by direct interactions with regulatory proteins and serves as a scaffold for the assembly of a functional pre-initiation complex with RNA polymerase II and the general transcription factors. Required for transcriptional activation by adenovirus E1A protein. Required for ELK1-dependent transcriptional activation in response to activated Ras signaling. This Homo sapiens (Human) protein is Mediator of RNA polymerase II transcription subunit 23 (MED23).